The chain runs to 147 residues: MADFDMVLKCWGLVEADYATYGSLVLTRLFTEHPETLKLFPKFAGIAHGDLAGDAGVSAHGATVLNKLGDLLKARGGHAALLKPLSSSHATKHKIPIINFKLIAEVIGKVMEEKAGLDAAGQTALRNVMAVIIADMEADYKELGFTE.

One can recognise a Globin domain in the interval 2 to 141; that stretch reads ADFDMVLKCW…IIADMEADYK (140 aa). Histidine 60 is a binding site for nitrite. O2 is bound at residue histidine 60. Histidine 89 serves as a coordination point for heme b.

Belongs to the globin family. As to quaternary structure, monomeric.

It is found in the cytoplasm. The protein localises to the sarcoplasm. It catalyses the reaction Fe(III)-heme b-[protein] + nitric oxide + H2O = Fe(II)-heme b-[protein] + nitrite + 2 H(+). The enzyme catalyses H2O2 + AH2 = A + 2 H2O. Its function is as follows. Monomeric heme protein which primary function is to store oxygen and facilitate its diffusion within muscle tissues. Reversibly binds oxygen through a pentacoordinated heme iron and enables its timely and efficient release as needed during periods of heightened demand. Depending on the oxidative conditions of tissues and cells, and in addition to its ability to bind oxygen, it also has a nitrite reductase activity whereby it regulates the production of bioactive nitric oxide. Under stress conditions, like hypoxia and anoxia, it also protects cells against reactive oxygen species thanks to its pseudoperoxidase activity. The sequence is that of Myoglobin (mb) from Pseudochaenichthys georgianus (South Georgia icefish).